The following is a 361-amino-acid chain: Phospho-N-acetylmuramoyl-pentapeptide-transferase (361 aa).

The next 10 membrane-spanning stretches (helical) occupy residues 27–47 (GAIV…ISTL), 72–92 (TPTM…LLWA), 94–114 (LSNL…LIGF), 133–153 (ARLA…INAG), 169–189 (LLLD…VAAG), 200–220 (GLAI…SYLS), 237–257 (VGEL…FLWF), 264–284 (IFMG…IAVA), 289–309 (IVLA…IVQV), and 338–358 (QVVI…LATL).

This sequence belongs to the glycosyltransferase 4 family. MraY subfamily. Requires Mg(2+) as cofactor.

It is found in the cell inner membrane. The catalysed reaction is UDP-N-acetyl-alpha-D-muramoyl-L-alanyl-gamma-D-glutamyl-meso-2,6-diaminopimeloyl-D-alanyl-D-alanine + di-trans,octa-cis-undecaprenyl phosphate = di-trans,octa-cis-undecaprenyl diphospho-N-acetyl-alpha-D-muramoyl-L-alanyl-D-glutamyl-meso-2,6-diaminopimeloyl-D-alanyl-D-alanine + UMP. Its pathway is cell wall biogenesis; peptidoglycan biosynthesis. Functionally, catalyzes the initial step of the lipid cycle reactions in the biosynthesis of the cell wall peptidoglycan: transfers peptidoglycan precursor phospho-MurNAc-pentapeptide from UDP-MurNAc-pentapeptide onto the lipid carrier undecaprenyl phosphate, yielding undecaprenyl-pyrophosphoryl-MurNAc-pentapeptide, known as lipid I. The sequence is that of Phospho-N-acetylmuramoyl-pentapeptide-transferase from Azorhizobium caulinodans (strain ATCC 43989 / DSM 5975 / JCM 20966 / LMG 6465 / NBRC 14845 / NCIMB 13405 / ORS 571).